Here is a 96-residue protein sequence, read N- to C-terminus: Prokineticin Bo8 (96 aa).

The first 19 residues, 1–19 (MKCFAQIVVLLLVIAFSHG), serve as a signal peptide directing secretion. 5 cysteine pairs are disulfide-bonded: C26-C38, C32-C50, C37-C78, C60-C86, and C80-C95.

As to expression, expressed by the skin glands.

It localises to the secreted. In terms of biological role, potent agonist for both PKR1/PROKR1 and PKR2/PROKR2, and inducer of a potent and long-lasting hyperalgesia. Also potentiates capsaicin-induced TRPV1 current, when tested on DRG neurons. At subnanomolar concentrations, this protein both induces potent chemotaxis of macrophages and stimulates LPS-induced production of the pro-inflammatory cytokines IL-1 and IL-12. In vivo, potently stimulates the contraction of the guinea-pig gastrointestinal (GI) smooth muscle (nanomolar concentration). The chain is Prokineticin Bo8 from Bombina orientalis (Oriental fire-bellied toad).